The following is a 365-amino-acid chain: S-adenosylmethionine:tRNA ribosyltransferase-isomerase (365 aa).

This sequence belongs to the QueA family. As to quaternary structure, monomer.

Its subcellular location is the cytoplasm. It catalyses the reaction 7-aminomethyl-7-carbaguanosine(34) in tRNA + S-adenosyl-L-methionine = epoxyqueuosine(34) in tRNA + adenine + L-methionine + 2 H(+). It participates in tRNA modification; tRNA-queuosine biosynthesis. In terms of biological role, transfers and isomerizes the ribose moiety from AdoMet to the 7-aminomethyl group of 7-deazaguanine (preQ1-tRNA) to give epoxyqueuosine (oQ-tRNA). This Rickettsia rickettsii (strain Iowa) protein is S-adenosylmethionine:tRNA ribosyltransferase-isomerase.